We begin with the raw amino-acid sequence, 268 residues long: Acidic leucine-rich nuclear phosphoprotein 32 family member E (268 aa).

Met-1 carries the post-translational modification N-acetylmethionine. LRR repeat units lie at residues Glu-18–Asn-38, Glu-43–Asn-64, Lys-65–Cys-87, and Asn-89–Gln-110. Residue Lys-68 forms a Glycyl lysine isopeptide (Lys-Gly) (interchain with G-Cter in SUMO2) linkage. The LRRCT domain occupies Cys-123–Glu-161. Acidic residues-rich tracts occupy residues Asp-149–Val-216 and Ile-226–Glu-247. Positions Asp-149–Asp-268 are disordered. A ZID domain region spans residues Glu-215 to Asp-268. Residues Gly-248 to Ala-259 show a composition bias toward basic and acidic residues.

The protein belongs to the ANP32 family. Interacts with the importin alpha KPNA1 and KPNA2. Component of a SWR1-like complex, composed of EP400, KAT5/TIP60, TRRAP, BRD8, RUVBL1, RUVBL2, ING3 and ANP32E; the complex does not contain SRCAP. Interacts with H2A.Z/H2AZ1. Post-translationally, phosphorylated. The phosphorylation is nuclear localization signal (NLS)-dependent. Expressed in peripheral blood leukocytes, colon, small intestine, prostate, thymus, spleen, skeletal muscle, liver and kidney.

Its subcellular location is the cytoplasm. It is found in the nucleus. Histone chaperone that specifically mediates the genome-wide removal of histone H2A.Z/H2AZ1 from the nucleosome: removes H2A.Z/H2AZ1 from its normal sites of deposition, especially from enhancer and insulator regions. Not involved in deposition of H2A.Z/H2AZ1 in the nucleosome. May stabilize the evicted H2A.Z/H2AZ1-H2B dimer, thus shifting the equilibrium towards dissociation and the off-chromatin state. Inhibits activity of protein phosphatase 2A (PP2A). Does not inhibit protein phosphatase 1. May play a role in cerebellar development and synaptogenesis. This Homo sapiens (Human) protein is Acidic leucine-rich nuclear phosphoprotein 32 family member E (ANP32E).